Reading from the N-terminus, the 249-residue chain is Adenosylcobinamide-GDP ribazoletransferase (249 aa).

7 helical membrane passes run 29 to 49, 50 to 70, 104 to 124, 131 to 151, 165 to 185, 194 to 214, and 226 to 246; these read LYWFPVVGAFLGTLLAACAWL, PLSIGWSELASAVVVVGGFIV, VGSFGALALLSLMLLKWVAIL, AFALIASGVLLGRLSQVLLAA, GFVGGAGRTHAAVALALSLMM, PFLLFLLFGAALTAAALIGFL, and VLGAVSEVTELFVWLAAGVAF.

It belongs to the CobS family. Requires Mg(2+) as cofactor.

It is found in the cell inner membrane. The enzyme catalyses alpha-ribazole + adenosylcob(III)inamide-GDP = adenosylcob(III)alamin + GMP + H(+). The catalysed reaction is alpha-ribazole 5'-phosphate + adenosylcob(III)inamide-GDP = adenosylcob(III)alamin 5'-phosphate + GMP + H(+). The protein operates within cofactor biosynthesis; adenosylcobalamin biosynthesis; adenosylcobalamin from cob(II)yrinate a,c-diamide: step 7/7. Joins adenosylcobinamide-GDP and alpha-ribazole to generate adenosylcobalamin (Ado-cobalamin). Also synthesizes adenosylcobalamin 5'-phosphate from adenosylcobinamide-GDP and alpha-ribazole 5'-phosphate. This chain is Adenosylcobinamide-GDP ribazoletransferase, found in Chlorobium phaeovibrioides (strain DSM 265 / 1930) (Prosthecochloris vibrioformis (strain DSM 265)).